The following is a 402-amino-acid chain: Multidrug resistance protein MdtH (402 aa).

11 helical membrane-spanning segments follow: residues 13–33 (YFLLVDNMLVVLGFFVVFPLI), 34–54 (SIRFVDQMGWAALMVGIALGL), 99–116 (PWLLWFSCFLSGLGGTLF), 139–159 (LLMMQDSAGAVIGALLGSWLL), 165–185 (LVCATGAALFILCAAFNAWLL), 214–234 (VLTLTGYYMLAVQVMLMLPIM), 243–263 (AAVKWMYAIEACLSLTLLYPI), 277–297 (LMAGLLVMTLSMMPIGLVSSV), 300–320 (LFVLICTFYIGSIIAEPARET), 340–360 (LGLALGGALGYAGGGWLFDSG), and 368–388 (LPWVMLGVVGFITLIALWWQF).

Belongs to the major facilitator superfamily. DHA1 family. MdtH (TC 2.A.1.2.21) subfamily.

It localises to the cell inner membrane. The protein is Multidrug resistance protein MdtH of Enterobacter sp. (strain 638).